The chain runs to 207 residues: Uridine kinase (207 aa).

ATP is bound at residue 14 to 21; sequence GGSGSGKT.

It belongs to the uridine kinase family.

The protein localises to the cytoplasm. The enzyme catalyses uridine + ATP = UMP + ADP + H(+). The catalysed reaction is cytidine + ATP = CMP + ADP + H(+). It participates in pyrimidine metabolism; CTP biosynthesis via salvage pathway; CTP from cytidine: step 1/3. Its pathway is pyrimidine metabolism; UMP biosynthesis via salvage pathway; UMP from uridine: step 1/1. The protein is Uridine kinase of Deinococcus deserti (strain DSM 17065 / CIP 109153 / LMG 22923 / VCD115).